We begin with the raw amino-acid sequence, 254 residues long: MSFKEIKSTLEDMDEQSRLSAAHDIMDDTRKNVKSLGKKILNAYEKKQNEIARVKKLYEFDKQFGNIVIAGVDEVGRGPLAGPIVGAAVILELNVEKDLDLILGINDSKKLSSKKRQELSEIIKEKALAWEIASLDNNEIDKKGISWCNNEIFKIAISKLKKVPELVISDGYAVKGIGIKNHYIVKGDAQSASIACASIIAKVYRDNLMGEYAKSYSEYGFESNVGYGSKDHIDAIKKFGTTPIHRMSFLKNII.

An RNase H type-2 domain is found at 67–254; sequence IVIAGVDEVG…HRMSFLKNII (188 aa). Positions 73, 74, and 170 each coordinate a divalent metal cation.

It belongs to the RNase HII family. Mn(2+) is required as a cofactor. It depends on Mg(2+) as a cofactor.

It localises to the cytoplasm. It carries out the reaction Endonucleolytic cleavage to 5'-phosphomonoester.. Endonuclease that specifically degrades the RNA of RNA-DNA hybrids. The protein is Ribonuclease HII of Clostridium acetobutylicum (strain ATCC 824 / DSM 792 / JCM 1419 / IAM 19013 / LMG 5710 / NBRC 13948 / NRRL B-527 / VKM B-1787 / 2291 / W).